The sequence spans 153 residues: Prophage Rz endopeptidase RzpD (153 aa).

Its function is as follows. Necessary for host cell lysis. It is believed to code for an endopeptidase that cleaves the amino-carboxyl cross-link between the diaminopimelic acid and D-alanine residues in the murein component of the bacterial cell wall. The chain is Prophage Rz endopeptidase RzpD (rzpD) from Escherichia coli (strain K12).